The primary structure comprises 155 residues: Ribosome maturation factor RimP (155 aa).

The protein belongs to the RimP family.

The protein resides in the cytoplasm. Its function is as follows. Required for maturation of 30S ribosomal subunits. In Prochlorococcus marinus (strain MIT 9211), this protein is Ribosome maturation factor RimP.